The primary structure comprises 528 residues: Phosphoenolpyruvate carboxykinase (ATP) (528 aa).

Substrate contacts are provided by Arg56, Tyr192, and Lys198. Residues Lys198, His217, and 233-241 (GLSGTGKTT) contribute to the ATP site. Positions 198 and 217 each coordinate Mn(2+). Mn(2+) is bound at residue Asp254. ATP contacts are provided by Glu282, Arg319, and Thr444. Residue Arg319 participates in substrate binding.

The protein belongs to the phosphoenolpyruvate carboxykinase (ATP) family. Mn(2+) serves as cofactor.

The protein resides in the cytoplasm. It carries out the reaction oxaloacetate + ATP = phosphoenolpyruvate + ADP + CO2. The protein operates within carbohydrate biosynthesis; gluconeogenesis. Involved in the gluconeogenesis. Catalyzes the conversion of oxaloacetate (OAA) to phosphoenolpyruvate (PEP) through direct phosphoryl transfer between the nucleoside triphosphate and OAA. This is Phosphoenolpyruvate carboxykinase (ATP) from Geobacillus kaustophilus (strain HTA426).